The sequence spans 119 residues: Large ribosomal subunit protein uL24 (119 aa).

This sequence belongs to the universal ribosomal protein uL24 family. Part of the 50S ribosomal subunit.

One of two assembly initiator proteins, it binds directly to the 5'-end of the 23S rRNA, where it nucleates assembly of the 50S subunit. In terms of biological role, located at the polypeptide exit tunnel on the outside of the subunit. The polypeptide is Large ribosomal subunit protein uL24 (Saccharolobus solfataricus (strain ATCC 35092 / DSM 1617 / JCM 11322 / P2) (Sulfolobus solfataricus)).